A 207-amino-acid chain; its full sequence is uncharacterized protein (207 aa).

This is an uncharacterized protein from Bacillus subtilis (strain 168).